Reading from the N-terminus, the 228-residue chain is Ribosomal RNA small subunit methyltransferase G (228 aa).

S-adenosyl-L-methionine is bound by residues glycine 89, leucine 94, 140–141 (VE), and arginine 159.

The protein belongs to the methyltransferase superfamily. RNA methyltransferase RsmG family.

The protein localises to the cytoplasm. It catalyses the reaction guanosine(527) in 16S rRNA + S-adenosyl-L-methionine = N(7)-methylguanosine(527) in 16S rRNA + S-adenosyl-L-homocysteine. Specifically methylates the N7 position of guanine in position 527 of 16S rRNA. The polypeptide is Ribosomal RNA small subunit methyltransferase G (Burkholderia cenocepacia (strain HI2424)).